A 264-amino-acid polypeptide reads, in one-letter code: tRNA pseudouridine synthase A (264 aa).

D51 (nucleophile) is an active-site residue. Y109 is a binding site for substrate.

It belongs to the tRNA pseudouridine synthase TruA family. Homodimer.

It carries out the reaction uridine(38/39/40) in tRNA = pseudouridine(38/39/40) in tRNA. Functionally, formation of pseudouridine at positions 38, 39 and 40 in the anticodon stem and loop of transfer RNAs. The chain is tRNA pseudouridine synthase A from Yersinia pseudotuberculosis serotype O:1b (strain IP 31758).